The primary structure comprises 278 residues: Putative non-heme haloperoxidase (278 aa).

In terms of domain architecture, AB hydrolase-1 spans Pro-24–Phe-240. Catalysis depends on residues Ser-97 and Asp-221.

The protein belongs to the AB hydrolase superfamily.

This chain is Putative non-heme haloperoxidase (59.2), found in Mycobacterium (Mycobacteriophage D29).